Consider the following 211-residue polypeptide: Uracil phosphoribosyltransferase (211 aa).

Residues Arg-79, Arg-104, and 131 to 139 (DPMLATGGS) contribute to the 5-phospho-alpha-D-ribose 1-diphosphate site. Residues Ile-196 and 201 to 203 (GDA) contribute to the uracil site. A 5-phospho-alpha-D-ribose 1-diphosphate-binding site is contributed by Asp-202.

Belongs to the UPRTase family. Mg(2+) is required as a cofactor.

It carries out the reaction UMP + diphosphate = 5-phospho-alpha-D-ribose 1-diphosphate + uracil. Its pathway is pyrimidine metabolism; UMP biosynthesis via salvage pathway; UMP from uracil: step 1/1. With respect to regulation, allosterically activated by GTP. Catalyzes the conversion of uracil and 5-phospho-alpha-D-ribose 1-diphosphate (PRPP) to UMP and diphosphate. The polypeptide is Uracil phosphoribosyltransferase (Lactococcus lactis subsp. cremoris (strain SK11)).